A 454-amino-acid polypeptide reads, in one-letter code: CCA-adding enzyme (454 aa).

Residues S51 and K54 each coordinate ATP. CTP is bound by residues S51 and K54. 3 residues coordinate Mg(2+): D63, D65, and D118. H141, K161, and Y170 together coordinate ATP. H141, K161, and Y170 together coordinate CTP.

It belongs to the tRNA nucleotidyltransferase/poly(A) polymerase family. Archaeal CCA-adding enzyme subfamily. Homodimer. The cofactor is Mg(2+).

The catalysed reaction is a tRNA precursor + 2 CTP + ATP = a tRNA with a 3' CCA end + 3 diphosphate. It carries out the reaction a tRNA with a 3' CCA end + 2 CTP + ATP = a tRNA with a 3' CCACCA end + 3 diphosphate. Its function is as follows. Catalyzes the addition and repair of the essential 3'-terminal CCA sequence in tRNAs without using a nucleic acid template. Adds these three nucleotides in the order of C, C, and A to the tRNA nucleotide-73, using CTP and ATP as substrates and producing inorganic pyrophosphate. tRNA 3'-terminal CCA addition is required both for tRNA processing and repair. Also involved in tRNA surveillance by mediating tandem CCA addition to generate a CCACCA at the 3' terminus of unstable tRNAs. While stable tRNAs receive only 3'-terminal CCA, unstable tRNAs are marked with CCACCA and rapidly degraded. The sequence is that of CCA-adding enzyme from Methanothermobacter thermautotrophicus (strain ATCC 29096 / DSM 1053 / JCM 10044 / NBRC 100330 / Delta H) (Methanobacterium thermoautotrophicum).